The primary structure comprises 317 residues: Glutaminase (317 aa).

Serine 67, asparagine 118, glutamate 162, asparagine 169, tyrosine 193, tyrosine 245, and valine 263 together coordinate substrate.

Belongs to the glutaminase family. As to quaternary structure, homotetramer.

The enzyme catalyses L-glutamine + H2O = L-glutamate + NH4(+). In Brucella abortus (strain S19), this protein is Glutaminase.